The sequence spans 238 residues: dITP/XTP pyrophosphatase (238 aa).

7–12 (SANQHK) lines the substrate pocket. Asp89 serves as the catalytic Proton acceptor. Position 89 (Asp89) interacts with Mg(2+). Substrate-binding positions include Ser90, 191–194 (FGYD), Lys217, and 222–223 (HR).

This sequence belongs to the HAM1 NTPase family. Homodimer. Requires Mg(2+) as cofactor.

It catalyses the reaction XTP + H2O = XMP + diphosphate + H(+). The catalysed reaction is dITP + H2O = dIMP + diphosphate + H(+). The enzyme catalyses ITP + H2O = IMP + diphosphate + H(+). Its function is as follows. Pyrophosphatase that catalyzes the hydrolysis of nucleoside triphosphates to their monophosphate derivatives, with a high preference for the non-canonical purine nucleotides XTP (xanthosine triphosphate), dITP (deoxyinosine triphosphate) and ITP. Seems to function as a house-cleaning enzyme that removes non-canonical purine nucleotides from the nucleotide pool, thus preventing their incorporation into DNA/RNA and avoiding chromosomal lesions. The chain is dITP/XTP pyrophosphatase from Helicobacter hepaticus (strain ATCC 51449 / 3B1).